We begin with the raw amino-acid sequence, 522 residues long: MQLAKPLKYAAISGIVAFVGLMFGWVIFPAILKSQLKKEMALSKKTDVRKMWEKIPFALDFKIYLFNYTNAEDVQKGAVPIVKEVGPFYFEEWKEKVEVEENEGNDTINYKKIDVFLFKPELSGPGLTGEEVIVMPNIFMMAMALTVYREKPAMLNVAAKAINGIFDSPSDVFMRVKALDILFRGIIINCDRTEFAPKAACTTIKKEAPNGIVFEPNNQLRFSLFGVRNNSVDPHVVTVKRGVQNVMDVGRVVAIDGKTKMNVWRDSCNEYQGTDGTVFPPFLTHKDRLQSFSGDLCRSFKPWFQKKTSYNGIKTNRYVANIGDFANDPELQCYCDSPDKCPPKGLMDLYKCIKAPMFVSMPHYLEGDPELLKNVKGLNPNAKEHGIEIDFEPISGTPMVAKQRIQFNIQLLKSEKMDLLKDLPGTIVPLFWIEEGLSLNKTFVKMLKSQLFIPKRVVSVVCWCMISFGSLGVIAAVIFHFKGDIMHLAVAGDNSVSKIKPENDENKEVGVMGQNQEPAKVM.

Residues 1–11 lie on the Cytoplasmic side of the membrane; it reads MQLAKPLKYAA. The helical transmembrane segment at 12 to 32 threads the bilayer; sequence ISGIVAFVGLMFGWVIFPAIL. Topologically, residues 33–458 are extracellular; the sequence is KSQLKKEMAL…SQLFIPKRVV (426 aa). Asn67, Asn105, and Asn229 each carry an N-linked (GlcNAc...) asparagine glycan. 3 cysteine pairs are disulfide-bonded: Cys268–Cys333, Cys297–Cys352, and Cys335–Cys341. Asn440 is a glycosylation site (N-linked (GlcNAc...) asparagine). Residues 459–479 form a helical membrane-spanning segment; the sequence is SVVCWCMISFGSLGVIAAVIF. The Cytoplasmic segment spans residues 480–522; sequence HFKGDIMHLAVAGDNSVSKIKPENDENKEVGVMGQNQEPAKVM. Residues 500–522 form a disordered region; the sequence is KPENDENKEVGVMGQNQEPAKVM. The segment covering 513 to 522 has biased composition (polar residues); it reads GQNQEPAKVM.

It belongs to the CD36 family. As to expression, principal component of the olfactory cilia membrane. Detected in both male and female antennae but not present in leg, abdomen, thorax or head.

It is found in the cell membrane. Plays an olfactory role that is not restricted to pheromone sensitivity. This chain is Sensory neuron membrane protein 1, found in Bombyx mori (Silk moth).